The primary structure comprises 469 residues: Tetratricopeptide repeat protein 38 (469 aa).

Residue Ala2 is modified to N-acetylalanine. Residue Ser5 is modified to Phosphoserine. TPR repeat units lie at residues 108 to 141 (REQLHVSAVETFAKGNFPKACELWEQILQDHPTD), 180 to 213 (SYVKGIYSFGLMETNFYDQAEKLAKEALSINPTD), and 252 to 285 (CHNYWHWALYLIEKGEYEAALTIYDTHILPSLQA).

Belongs to the TTC38 family.

This is Tetratricopeptide repeat protein 38 (TTC38) from Pongo abelii (Sumatran orangutan).